A 119-amino-acid polypeptide reads, in one-letter code: Immunoglobulin heavy variable 3-49 (119 aa).

The N-terminal stretch at 1–19 (MEFGLSWVFLVAILKGVQC) is a signal peptide. The framework-1 stretch occupies residues 20–44 (EVQLVESGGGLVQPGRSLRLSCTAS). One can recognise an Ig-like domain in the interval 20-119 (EVQLVESGGG…EDTAVYYCTR (100 aa)). Cysteine 41 and cysteine 117 are oxidised to a cystine. The interval 45–52 (GFTFGDYA) is complementarity-determining-1. Residues 53–69 (MSWVRQAPGKGLEWVGF) form a framework-2 region. The segment at 70-79 (IRSKAYGGTT) is complementarity-determining-2. The interval 80 to 117 (EYAASVKGRFTISRDDSKSIAYLQMNSLKTEDTAVYYC) is framework-3. A complementarity-determining-3 region spans residues 118–119 (TR).

As to quaternary structure, immunoglobulins are composed of two identical heavy chains and two identical light chains; disulfide-linked.

The protein localises to the secreted. The protein resides in the cell membrane. In terms of biological role, v region of the variable domain of immunoglobulin heavy chains that participates in the antigen recognition. Immunoglobulins, also known as antibodies, are membrane-bound or secreted glycoproteins produced by B lymphocytes. In the recognition phase of humoral immunity, the membrane-bound immunoglobulins serve as receptors which, upon binding of a specific antigen, trigger the clonal expansion and differentiation of B lymphocytes into immunoglobulins-secreting plasma cells. Secreted immunoglobulins mediate the effector phase of humoral immunity, which results in the elimination of bound antigens. The antigen binding site is formed by the variable domain of one heavy chain, together with that of its associated light chain. Thus, each immunoglobulin has two antigen binding sites with remarkable affinity for a particular antigen. The variable domains are assembled by a process called V-(D)-J rearrangement and can then be subjected to somatic hypermutations which, after exposure to antigen and selection, allow affinity maturation for a particular antigen. This is Immunoglobulin heavy variable 3-49 from Homo sapiens (Human).